A 420-amino-acid polypeptide reads, in one-letter code: Serine hydroxymethyltransferase (420 aa).

(6S)-5,6,7,8-tetrahydrofolate-binding positions include L121 and 125–127 (GHL). K229 bears the N6-(pyridoxal phosphate)lysine mark.

This sequence belongs to the SHMT family. As to quaternary structure, homodimer. Pyridoxal 5'-phosphate is required as a cofactor.

It localises to the cytoplasm. It catalyses the reaction (6R)-5,10-methylene-5,6,7,8-tetrahydrofolate + glycine + H2O = (6S)-5,6,7,8-tetrahydrofolate + L-serine. Its pathway is one-carbon metabolism; tetrahydrofolate interconversion. The protein operates within amino-acid biosynthesis; glycine biosynthesis; glycine from L-serine: step 1/1. Functionally, catalyzes the reversible interconversion of serine and glycine with tetrahydrofolate (THF) serving as the one-carbon carrier. This reaction serves as the major source of one-carbon groups required for the biosynthesis of purines, thymidylate, methionine, and other important biomolecules. Also exhibits THF-independent aldolase activity toward beta-hydroxyamino acids, producing glycine and aldehydes, via a retro-aldol mechanism. The sequence is that of Serine hydroxymethyltransferase from Glaesserella parasuis serovar 5 (strain SH0165) (Haemophilus parasuis).